Reading from the N-terminus, the 128-residue chain is Histone H2A (128 aa).

It belongs to the histone H2A family. As to quaternary structure, the nucleosome is a histone octamer containing two molecules each of H2A, H2B, H3 and H4 assembled in one H3-H4 heterotetramer and two H2A-H2B heterodimers. The octamer wraps approximately 147 bp of DNA.

It localises to the nucleus. Its subcellular location is the chromosome. Its function is as follows. Core component of nucleosome. Nucleosomes wrap and compact DNA into chromatin, limiting DNA accessibility to the cellular machineries which require DNA as a template. Histones thereby play a central role in transcription regulation, DNA repair, DNA replication and chromosomal stability. DNA accessibility is regulated via a complex set of post-translational modifications of histones, also called histone code, and nucleosome remodeling. The protein is Histone H2A (HTA1) of Encephalitozoon cuniculi (strain GB-M1) (Microsporidian parasite).